Consider the following 179-residue polypeptide: Large ribosomal subunit protein uL5 (179 aa).

The protein belongs to the universal ribosomal protein uL5 family. Part of the 50S ribosomal subunit; part of the 5S rRNA/L5/L18/L25 subcomplex. Contacts the 5S rRNA and the P site tRNA. Forms a bridge to the 30S subunit in the 70S ribosome.

Its function is as follows. This is one of the proteins that bind and probably mediate the attachment of the 5S RNA into the large ribosomal subunit, where it forms part of the central protuberance. In the 70S ribosome it contacts protein S13 of the 30S subunit (bridge B1b), connecting the 2 subunits; this bridge is implicated in subunit movement. Contacts the P site tRNA; the 5S rRNA and some of its associated proteins might help stabilize positioning of ribosome-bound tRNAs. The chain is Large ribosomal subunit protein uL5 from Synechococcus sp. (strain CC9605).